The sequence spans 54 residues: Sperm protamine P3 (54 aa).

Residues 1–54 form a disordered region; sequence RRRRRRGKGKGGKKKKGKKRRRRGRKGKGKGKKKGKRKGKRGGKRRRRRRKGKK.

Gonads.

It is found in the nucleus. Its subcellular location is the chromosome. Its function is as follows. Protamines substitute for histones in the chromatin of sperm during the haploid phase of spermatogenesis. They compact sperm DNA into a highly condensed, stable and inactive complex. The polypeptide is Sperm protamine P3 (Bolinus brandaris (Purple dye murex)).